Consider the following 217-residue polypeptide: Response regulator RR06 (217 aa).

The 114-residue stretch at 2–115 (NILVADDEEM…LLVKRIKALI (114 aa)) folds into the Response regulatory domain. Asp-51 is subject to 4-aspartylphosphate. The ompR/PhoB-type DNA-binding region spans 122–217 (EDIWRYQDVT…VKNVGYKISL (96 aa)).

Phosphorylated at threonine residues by StkP; threonine phosphorylation enhances RR06 binding to DNA and may also increase expression of CbpA. May be de-phosphorylated by PhpP.

Member of the two-component regulatory system HK06/RR06 involved in regulation of target genes, including choline-binding protein CbpA. Binds to the promoter region of CbpA and directly activates transcription. In Streptococcus pneumoniae serotype 2 (strain D39 / NCTC 7466), this protein is Response regulator RR06.